Here is a 121-residue protein sequence, read N- to C-terminus: Large ribosomal subunit protein uL18 (121 aa).

This sequence belongs to the universal ribosomal protein uL18 family. Part of the 50S ribosomal subunit; part of the 5S rRNA/L5/L18/L25 subcomplex. Contacts the 5S and 23S rRNAs.

This is one of the proteins that bind and probably mediate the attachment of the 5S RNA into the large ribosomal subunit, where it forms part of the central protuberance. The protein is Large ribosomal subunit protein uL18 of Thermoanaerobacter pseudethanolicus (strain ATCC 33223 / 39E) (Clostridium thermohydrosulfuricum).